Reading from the N-terminus, the 122-residue chain is Large ribosomal subunit protein uL14 (122 aa).

This sequence belongs to the universal ribosomal protein uL14 family. As to quaternary structure, part of the 50S ribosomal subunit. Forms a cluster with proteins L3 and L19. In the 70S ribosome, L14 and L19 interact and together make contacts with the 16S rRNA in bridges B5 and B8.

Binds to 23S rRNA. Forms part of two intersubunit bridges in the 70S ribosome. This Brevibacillus brevis (strain 47 / JCM 6285 / NBRC 100599) protein is Large ribosomal subunit protein uL14.